Consider the following 566-residue polypeptide: KsdD-like steroid dehydrogenase MT0809 (566 aa).

23 to 54 (DAIVVGAGLAGLVAACELADRGLRVLILDQEN) is an FAD binding site.

It belongs to the FAD-dependent oxidoreductase 2 family. FAD is required as a cofactor.

The protein operates within lipid metabolism; steroid biosynthesis. Its function is as follows. Able to catalyze the elimination of the C-1 and C-2 hydrogen atoms of the A-ring from the polycyclic ring structure of 3-ketosteroids. This is KsdD-like steroid dehydrogenase MT0809 from Mycobacterium tuberculosis (strain CDC 1551 / Oshkosh).